The following is a 459-amino-acid chain: Cysteine--tRNA ligase (459 aa).

A Zn(2+)-binding site is contributed by Cys-28. A 'HIGH' region motif is present at residues Val-30–His-40. Residues Cys-209, His-234, and Glu-238 each coordinate Zn(2+). The 'KMSKS' region signature appears at Lys-266–Ser-270. Lys-269 provides a ligand contact to ATP.

It belongs to the class-I aminoacyl-tRNA synthetase family. Monomer. Zn(2+) is required as a cofactor.

Its subcellular location is the cytoplasm. It catalyses the reaction tRNA(Cys) + L-cysteine + ATP = L-cysteinyl-tRNA(Cys) + AMP + diphosphate. This Shewanella loihica (strain ATCC BAA-1088 / PV-4) protein is Cysteine--tRNA ligase.